The following is a 424-amino-acid chain: Tol-Pal system protein TolB (424 aa).

The first 24 residues, 1-24 (MNKARAIARWISFLLLIAAGQVCA), serve as a signal peptide directing secretion.

This sequence belongs to the TolB family. The Tol-Pal system is composed of five core proteins: the inner membrane proteins TolA, TolQ and TolR, the periplasmic protein TolB and the outer membrane protein Pal. They form a network linking the inner and outer membranes and the peptidoglycan layer.

The protein resides in the periplasm. Part of the Tol-Pal system, which plays a role in outer membrane invagination during cell division and is important for maintaining outer membrane integrity. The polypeptide is Tol-Pal system protein TolB (Methylococcus capsulatus (strain ATCC 33009 / NCIMB 11132 / Bath)).